Here is a 617-residue protein sequence, read N- to C-terminus: MPELRSRTVTHGRNMAGARALMRASGVPGADIGRKPIIAVANSFTEFVPGHTHLQPVGRIVSEAITAAGGIAREFNTIAVDDGIAMGHGGMLYSLPSRDLIADSVEYMVEAHCADALICISNCDKITPGMLMAALRLNIPTVFVSGGPMESGRATLVDGTVRTLDLVDAISDAVNDKISDEDILRIEENACPTCGSCSGMFTANSMNCLTEAIGLSLPGNGSVLATHTARKGLYEDAARTVVDITRRYYEQDDESVLPRNIATHAAFENAMALDIAMGGSTNTILHLLAAAQEAGVPFGLDEINEVSRRVPCLAKVAPNVAKDRTYYMEDVHRAGGIPALLGELHRAGLLNEDVHSVHSPSLSDWLKTWDVRAGSPSPEAIELWHAAPGCVRSSEAFSQSERWEALDEDAEGGCIRSAEHAYSKDGGLAVLKGNLAVDGCVVKTAGVDESIWTFEGPAVVCESQDEAVDKILRKEITHGDVVVIRYEGPKGGPGMQEMLYPTSFLKGRGLGKTCALITDGRFSGGTSGLSIGHASPEAASGGTIALVQDGDRIRIDIPNRTIDLLVDEAELSRRDQALNGVYAPVNRERKVSAALRAYAAMATSADKGAVRDVSKLG.

D82 contributes to the Mg(2+) binding site. C123 is a [2Fe-2S] cluster binding site. Mg(2+) is bound by residues D124 and K125. K125 bears the N6-carboxylysine mark. C197 provides a ligand contact to [2Fe-2S] cluster. E497 serves as a coordination point for Mg(2+). Residue S523 is the Proton acceptor of the active site.

The protein belongs to the IlvD/Edd family. In terms of assembly, homodimer. [2Fe-2S] cluster serves as cofactor. Requires Mg(2+) as cofactor.

It carries out the reaction (2R)-2,3-dihydroxy-3-methylbutanoate = 3-methyl-2-oxobutanoate + H2O. It catalyses the reaction (2R,3R)-2,3-dihydroxy-3-methylpentanoate = (S)-3-methyl-2-oxopentanoate + H2O. It participates in amino-acid biosynthesis; L-isoleucine biosynthesis; L-isoleucine from 2-oxobutanoate: step 3/4. Its pathway is amino-acid biosynthesis; L-valine biosynthesis; L-valine from pyruvate: step 3/4. Functionally, functions in the biosynthesis of branched-chain amino acids. Catalyzes the dehydration of (2R,3R)-2,3-dihydroxy-3-methylpentanoate (2,3-dihydroxy-3-methylvalerate) into 2-oxo-3-methylpentanoate (2-oxo-3-methylvalerate) and of (2R)-2,3-dihydroxy-3-methylbutanoate (2,3-dihydroxyisovalerate) into 2-oxo-3-methylbutanoate (2-oxoisovalerate), the penultimate precursor to L-isoleucine and L-valine, respectively. The sequence is that of Dihydroxy-acid dehydratase from Streptomyces avermitilis (strain ATCC 31267 / DSM 46492 / JCM 5070 / NBRC 14893 / NCIMB 12804 / NRRL 8165 / MA-4680).